We begin with the raw amino-acid sequence, 75 residues long: uncharacterized protein (75 aa).

Residues 29 to 72 (EVYHVESGDTLWTIAKSFEIPVQQLMNLNKLSSDRIYPGQIIKI) form the LysM domain.

This is an uncharacterized protein from Bacillus subtilis (strain 168).